Here is a 217-residue protein sequence, read N- to C-terminus: Adenylate kinase (217 aa).

10–15 (GAGKGT) is a binding site for ATP. The segment at 30-59 (STGDILRAAVSEMTPMGVKAKGYMESGALV) is NMP. AMP contacts are provided by residues Thr-31, Arg-36, 57–59 (ALV), 85–88 (GFPR), and Gln-92. The interval 126–163 (GRRTCRLCGKGYHVVFDPPRVSGRCDECLGELFQRDDD) is LID. Residue Arg-127 participates in ATP binding. The Zn(2+) site is built by Cys-130, Cys-133, Cys-150, and Cys-153. Residues Arg-160 and Arg-171 each contribute to the AMP site. ATP is bound at residue Gly-199.

This sequence belongs to the adenylate kinase family. In terms of assembly, monomer.

It is found in the cytoplasm. It catalyses the reaction AMP + ATP = 2 ADP. The protein operates within purine metabolism; AMP biosynthesis via salvage pathway; AMP from ADP: step 1/1. Catalyzes the reversible transfer of the terminal phosphate group between ATP and AMP. Plays an important role in cellular energy homeostasis and in adenine nucleotide metabolism. In Geotalea uraniireducens (strain Rf4) (Geobacter uraniireducens), this protein is Adenylate kinase.